A 215-amino-acid chain; its full sequence is Large ribosomal subunit protein mL43 (215 aa).

This sequence belongs to the mitochondrion-specific ribosomal protein mL43 family. In terms of assembly, component of the mitochondrial large ribosomal subunit (mt-LSU). Mature mammalian 55S mitochondrial ribosomes consist of a small (28S) and a large (39S) subunit. The 28S small subunit contains a 12S ribosomal RNA (12S mt-rRNA) and 30 different proteins. The 39S large subunit contains a 16S rRNA (16S mt-rRNA), a copy of mitochondrial valine transfer RNA (mt-tRNA(Val)), which plays an integral structural role, and 52 different proteins. As to expression, high relative levels in skeletal muscle and testis. Lower levels of expression in the heart, brain, placenta, lung, liver, kidney, pancreas, spleen, thymus, prostate, ovary, small intestine, colon and leukocytes. Expression is coregulated with TWNK.

Its subcellular location is the mitochondrion. This Homo sapiens (Human) protein is Large ribosomal subunit protein mL43 (MRPL43).